Consider the following 370-residue polypeptide: Biotin synthase (370 aa).

The Radical SAM core domain maps to 50 to 276; that stretch reads FSDGTVDACS…IAVYRFLHPE (227 aa). [4Fe-4S] cluster-binding residues include C68, C72, and C75. Residues C208 and R280 each contribute to the [2Fe-2S] cluster site. The segment at 328–370 is disordered; the sequence is AGLEPNREANTFDPESVKARHRSPAAETASNANRTNATTETDD. The span at 352 to 370 shows a compositional bias: low complexity; it reads AAETASNANRTNATTETDD.

This sequence belongs to the radical SAM superfamily. Biotin synthase family. As to quaternary structure, homodimer. [4Fe-4S] cluster serves as cofactor. Requires [2Fe-2S] cluster as cofactor.

The catalysed reaction is (4R,5S)-dethiobiotin + (sulfur carrier)-SH + 2 reduced [2Fe-2S]-[ferredoxin] + 2 S-adenosyl-L-methionine = (sulfur carrier)-H + biotin + 2 5'-deoxyadenosine + 2 L-methionine + 2 oxidized [2Fe-2S]-[ferredoxin]. It participates in cofactor biosynthesis; biotin biosynthesis; biotin from 7,8-diaminononanoate: step 2/2. Catalyzes the conversion of dethiobiotin (DTB) to biotin by the insertion of a sulfur atom into dethiobiotin via a radical-based mechanism. This is Biotin synthase from Natronomonas pharaonis (strain ATCC 35678 / DSM 2160 / CIP 103997 / JCM 8858 / NBRC 14720 / NCIMB 2260 / Gabara) (Halobacterium pharaonis).